The sequence spans 157 residues: MICSTLLAVEAAEKNGLFDLDATLPIIAVQFLLLVAVLNSLFYEPVTRVIDSRNDYIRTTQAEAQERLDKAMALTRQYEAEIGQARLQAQQVIAEAEAAAARIRSEKLAAAQAEIQAKLEAARRQIEQEKQTALEQLQQQVDAIAAQITEKLLGSAR.

Residues 22-42 (ATLPIIAVQFLLLVAVLNSLF) form a helical membrane-spanning segment.

The protein belongs to the ATPase B chain family. In terms of assembly, F-type ATPases have 2 components, F(1) - the catalytic core - and F(0) - the membrane proton channel. F(1) has five subunits: alpha(3), beta(3), gamma(1), delta(1), epsilon(1). F(0) has four main subunits: a(1), b(1), b'(1) and c(10-14). The alpha and beta chains form an alternating ring which encloses part of the gamma chain. F(1) is attached to F(0) by a central stalk formed by the gamma and epsilon chains, while a peripheral stalk is formed by the delta, b and b' chains.

Its subcellular location is the cellular thylakoid membrane. In terms of biological role, f(1)F(0) ATP synthase produces ATP from ADP in the presence of a proton or sodium gradient. F-type ATPases consist of two structural domains, F(1) containing the extramembraneous catalytic core and F(0) containing the membrane proton channel, linked together by a central stalk and a peripheral stalk. During catalysis, ATP synthesis in the catalytic domain of F(1) is coupled via a rotary mechanism of the central stalk subunits to proton translocation. Its function is as follows. Component of the F(0) channel, it forms part of the peripheral stalk, linking F(1) to F(0). The b'-subunit is a diverged and duplicated form of b found in plants and photosynthetic bacteria. The protein is ATP synthase subunit b' of Synechococcus sp. (strain JA-3-3Ab) (Cyanobacteria bacterium Yellowstone A-Prime).